A 126-amino-acid polypeptide reads, in one-letter code: Holo-[acyl-carrier-protein] synthase (126 aa).

Mg(2+) is bound by residues Asp8 and Glu57.

This sequence belongs to the P-Pant transferase superfamily. AcpS family. Mg(2+) is required as a cofactor.

The protein localises to the cytoplasm. The enzyme catalyses apo-[ACP] + CoA = holo-[ACP] + adenosine 3',5'-bisphosphate + H(+). In terms of biological role, transfers the 4'-phosphopantetheine moiety from coenzyme A to a Ser of acyl-carrier-protein. This chain is Holo-[acyl-carrier-protein] synthase, found in Geobacter sulfurreducens (strain ATCC 51573 / DSM 12127 / PCA).